Consider the following 336-residue polypeptide: Protein-lysine N-methyltransferase EFM3 (336 aa).

S-adenosyl-L-methionine-binding positions include tryptophan 147, 173 to 175 (GTG), aspartate 196, leucine 232, and alanine 251.

It belongs to the class I-like SAM-binding methyltransferase superfamily. EEF2KMT family.

The protein resides in the cytoplasm. Functionally, S-adenosyl-L-methionine-dependent protein-lysine N-methyltransferase that methylates elongation factor 2. The sequence is that of Protein-lysine N-methyltransferase EFM3 from Chaetomium thermophilum (strain DSM 1495 / CBS 144.50 / IMI 039719) (Thermochaetoides thermophila).